Reading from the N-terminus, the 363-residue chain is S-adenosylmethionine:tRNA ribosyltransferase-isomerase (363 aa).

This sequence belongs to the QueA family. Monomer.

It localises to the cytoplasm. It catalyses the reaction 7-aminomethyl-7-carbaguanosine(34) in tRNA + S-adenosyl-L-methionine = epoxyqueuosine(34) in tRNA + adenine + L-methionine + 2 H(+). It participates in tRNA modification; tRNA-queuosine biosynthesis. In terms of biological role, transfers and isomerizes the ribose moiety from AdoMet to the 7-aminomethyl group of 7-deazaguanine (preQ1-tRNA) to give epoxyqueuosine (oQ-tRNA). The sequence is that of S-adenosylmethionine:tRNA ribosyltransferase-isomerase from Haemophilus influenzae (strain 86-028NP).